The sequence spans 269 residues: 4-hydroxy-tetrahydrodipicolinate reductase (269 aa).

NAD(+)-binding positions include 10-15 (GANGRM), E36, 99-101 (GTT), and 123-126 (AANF). Residue H156 is the Proton donor/acceptor of the active site. Residue H157 coordinates (S)-2,3,4,5-tetrahydrodipicolinate. The active-site Proton donor is the K160. Residue 166-167 (GT) coordinates (S)-2,3,4,5-tetrahydrodipicolinate.

It belongs to the DapB family.

The protein resides in the cytoplasm. The enzyme catalyses (S)-2,3,4,5-tetrahydrodipicolinate + NAD(+) + H2O = (2S,4S)-4-hydroxy-2,3,4,5-tetrahydrodipicolinate + NADH + H(+). The catalysed reaction is (S)-2,3,4,5-tetrahydrodipicolinate + NADP(+) + H2O = (2S,4S)-4-hydroxy-2,3,4,5-tetrahydrodipicolinate + NADPH + H(+). Its pathway is amino-acid biosynthesis; L-lysine biosynthesis via DAP pathway; (S)-tetrahydrodipicolinate from L-aspartate: step 4/4. Functionally, catalyzes the conversion of 4-hydroxy-tetrahydrodipicolinate (HTPA) to tetrahydrodipicolinate. This is 4-hydroxy-tetrahydrodipicolinate reductase from Neisseria meningitidis serogroup B (strain ATCC BAA-335 / MC58).